Here is a 234-residue protein sequence, read N- to C-terminus: Multicopy suppressor of SEC21 protein 27 (234 aa).

Residues 1–47 (MQTPLESTDVKLDTLNEPSAHLIEKNVALPKDIFRSYLSYWIYEIAR) are Cytoplasmic-facing. Thr-3 is modified (phosphothreonine). The helical transmembrane segment at 48 to 68 (YTPVMILSLVIGVLVLLIIFF) threads the bilayer. Residues 69 to 72 (NDNE) are Extracellular-facing. Residues 73-93 (ACVFNSAYYAYLSLVVLLIIL) traverse the membrane as a helical segment. Topologically, residues 94–234 (GDGNPKLVSR…NIDALLKKTE (141 aa)) are cytoplasmic. Residues 231–234 (KKTE) are COPI binding.

It belongs to the DUP/COS family. Interacts with MST28. Binds to coatomer proteins of COPI and SEC23/SEC24 of COPII coated vesicles.

It localises to the endoplasmic reticulum. Its subcellular location is the golgi apparatus. The protein localises to the cytoplasmic vesicle. The protein resides in the COPI-coated vesicle membrane. It is found in the COPII-coated vesicle membrane. Involved in protein trafficking vesicle formation, probably by stabilizing of coatomer at the Golgi membrane and thus allowing the efficient formation of COPI coated vesicles. The chain is Multicopy suppressor of SEC21 protein 27 (MST27) from Saccharomyces cerevisiae (strain ATCC 204508 / S288c) (Baker's yeast).